A 147-amino-acid polypeptide reads, in one-letter code: Interleukin-4 (147 aa).

The first 24 residues, 1 to 24 (MGLSPHLAVTLFCFLICTGNGIHG), serve as a signal peptide directing secretion. An intrachain disulfide couples Cys47 to Cys87. N-linked (GlcNAc...) asparagine glycans are attached at residues Asn61, Asn90, and Asn117.

The protein belongs to the IL-4/IL-13 family.

Its subcellular location is the secreted. Participates in at least several B-cell activation processes as well as of other cell types. It is a costimulator of DNA-synthesis. It induces the expression of class II MHC molecules on resting B-cells. It enhances both secretion and cell surface expression of IgE and IgG1. It also regulates the expression of the low affinity Fc receptor for IgE (CD23) on both lymphocytes and monocytes. Positively regulates IL31RA expression in macrophages. Stimulates autophagy in dendritic cells by interfering with mTORC1 signaling and through the induction of RUFY4. This chain is Interleukin-4 (Il4), found in Rattus norvegicus (Rat).